A 407-amino-acid chain; its full sequence is Imidazolonepropionase (407 aa).

Residues H68 and H70 each contribute to the Fe(3+) site. Zn(2+) is bound by residues H68 and H70. R77, Y140, and H173 together coordinate 4-imidazolone-5-propanoate. N-formimidoyl-L-glutamate is bound at residue Y140. H238 provides a ligand contact to Fe(3+). H238 is a binding site for Zn(2+). Q241 is a 4-imidazolone-5-propanoate binding site. D313 provides a ligand contact to Fe(3+). Residue D313 participates in Zn(2+) binding. N-formimidoyl-L-glutamate contacts are provided by N315 and G317. 4-imidazolone-5-propanoate is bound at residue T318.

It belongs to the metallo-dependent hydrolases superfamily. HutI family. Zn(2+) is required as a cofactor. The cofactor is Fe(3+).

The protein localises to the cytoplasm. The catalysed reaction is 4-imidazolone-5-propanoate + H2O = N-formimidoyl-L-glutamate. The protein operates within amino-acid degradation; L-histidine degradation into L-glutamate; N-formimidoyl-L-glutamate from L-histidine: step 3/3. Its function is as follows. Catalyzes the hydrolytic cleavage of the carbon-nitrogen bond in imidazolone-5-propanoate to yield N-formimidoyl-L-glutamate. It is the third step in the universal histidine degradation pathway. In Burkholderia orbicola (strain MC0-3), this protein is Imidazolonepropionase.